Here is a 298-residue protein sequence, read N- to C-terminus: MFKSGFVAILGRPNVGKSTFLNHVMGQKIAVMSDKAQTTRNKIMGIYTTETEQIVFIDTPGIHKPKTALGDFMVESAYSTLREVETVLFMVPADEKRGKGDDMIIERLKAARIPVILVINKIDKVHPDQLLEQIDDFRSQMDFKEIVPISALQGNNVETLVQLLKDNLEEGFQYFPEDQITDHPERFLVSEMVREKVLHLTQQEVPHSVAVVVDSMKRDEVTDKVHIRVTIMVERDSQKGIIIGKQGAMLKKIGKLARRDIELMLGDKVYLETWVKVKKNWRDKKLDLADFGYNQKEY.

The region spanning 3 to 170 (KSGFVAILGR…VQLLKDNLEE (168 aa)) is the Era-type G domain. Positions 11–18 (GRPNVGKS) are G1. Residue 11–18 (GRPNVGKS) participates in GTP binding. The G2 stretch occupies residues 37–41 (QTTRN). The G3 stretch occupies residues 58–61 (DTPG). GTP contacts are provided by residues 58–62 (DTPGI) and 120–123 (NKID). Positions 120-123 (NKID) are G4. The segment at 149 to 151 (ISA) is G5. The KH type-2 domain maps to 201-279 (TQQEVPHSVA…YLETWVKVKK (79 aa)).

The protein belongs to the TRAFAC class TrmE-Era-EngA-EngB-Septin-like GTPase superfamily. Era GTPase family. As to quaternary structure, monomer.

It is found in the cytoplasm. It localises to the cell membrane. Functionally, an essential GTPase that binds both GDP and GTP, with rapid nucleotide exchange. Plays a role in 16S rRNA processing and 30S ribosomal subunit biogenesis and possibly also in cell cycle regulation and energy metabolism. In Streptococcus equi subsp. equi (strain 4047), this protein is GTPase Era.